A 25-amino-acid chain; its full sequence is Phospholipase A1 verutoxin-2a (25 aa).

Belongs to the AB hydrolase superfamily. Lipase family. In terms of processing, contains six disulfide bonds. In terms of tissue distribution, expressed by the venom gland.

It localises to the secreted. The enzyme catalyses a 1,2-diacyl-sn-glycero-3-phosphocholine + H2O = a 2-acyl-sn-glycero-3-phosphocholine + a fatty acid + H(+). It carries out the reaction 1-(9Z-octadecenoyl)-2-hexadecanoyl-sn-glycero-3-phosphocholine + H2O = 2-hexadecanoyl-sn-glycero-3-phosphocholine + (9Z)-octadecenoate + H(+). The catalysed reaction is a 1-acyl-sn-glycero-3-phosphocholine + H2O = sn-glycerol 3-phosphocholine + a fatty acid + H(+). It functions in the pathway phospholipid metabolism. Activity is maximal in the presence of calcium. However, unlike phospholipases A2 whose catalytic activity is strictly calcium-dependent, this enzyme shows considerable catalytic activity on phosphatidylcholine emulsified in calcium free solution; the catalytic activity of VT-2a assayed in the absence of calcium ions is 18-20% of that assayed in solution containing calcium ions. Functionally, catalyzes the hydrolysis of glycerophospholipids such as phosphatidylcholine (1,2-diacyl-sn-glycero-3-phosphocholine) and has a moderate activity to hydrolyze lysoglycerophospholipids such as lysophosphatidylcholine (1-acyl-sn-glycero-3-phosphocholine), but is unable to hydrolyze sphingomyelin. In addition to acting as an allergen, it possesses a potent hemolytic activity on red blood cells of mice (98.8% of hemolysis at 3.0 ug/ml). The sequence is that of Phospholipase A1 verutoxin-2a from Vespa velutina (Asian yellow-legged hornet).